The sequence spans 402 residues: Formate-dependent phosphoribosylglycinamide formyltransferase (402 aa).

Residues 22 to 23 (EL) and Glu82 contribute to the N(1)-(5-phospho-beta-D-ribosyl)glycinamide site. Residues Arg115, Lys160, 165–170 (SSGKGQ), 200–203 (EGFV), and Glu208 contribute to the ATP site. In terms of domain architecture, ATP-grasp spans 120-318 (RLAAETLGLP…EFELHARAIL (199 aa)). Residues Glu277 and Glu289 each coordinate Mg(2+). Residues Asp296, Lys365, and 372–373 (RR) contribute to the N(1)-(5-phospho-beta-D-ribosyl)glycinamide site.

The protein belongs to the PurK/PurT family. Homodimer.

It catalyses the reaction N(1)-(5-phospho-beta-D-ribosyl)glycinamide + formate + ATP = N(2)-formyl-N(1)-(5-phospho-beta-D-ribosyl)glycinamide + ADP + phosphate + H(+). It participates in purine metabolism; IMP biosynthesis via de novo pathway; N(2)-formyl-N(1)-(5-phospho-D-ribosyl)glycinamide from N(1)-(5-phospho-D-ribosyl)glycinamide (formate route): step 1/1. Functionally, involved in the de novo purine biosynthesis. Catalyzes the transfer of formate to 5-phospho-ribosyl-glycinamide (GAR), producing 5-phospho-ribosyl-N-formylglycinamide (FGAR). Formate is provided by PurU via hydrolysis of 10-formyl-tetrahydrofolate. The protein is Formate-dependent phosphoribosylglycinamide formyltransferase of Mycobacteroides abscessus (strain ATCC 19977 / DSM 44196 / CCUG 20993 / CIP 104536 / JCM 13569 / NCTC 13031 / TMC 1543 / L948) (Mycobacterium abscessus).